The sequence spans 444 residues: Ras-related protein RabX (444 aa).

29 to 36 lines the GTP pocket; that stretch reads GGDVCSKN. The Effector region motif lies at 51-58; it reads LIQVFDDY. Residue 73 to 77 participates in GTP binding; that stretch reads EFSSI. The interval 91–136 is disordered; that stretch reads ENNKNKNNNNNYNYNNNNYNNNNNNNNNNNNNNNNNNNNNNNNNNS. A compositionally biased stretch (low complexity) spans 95-135; sequence NKNNNNNYNYNNNNYNNNNNNNNNNNNNNNNNNNNNNNNNN. 207 to 210 is a binding site for GTP; that stretch reads NDSN. Disordered regions lie at residues 213 to 232 and 298 to 401; these read TPNF…SNII and LQGD…NNDL. Low complexity-rich tracts occupy residues 217 to 232 and 303 to 399; these read SDSS…SNII and NNNN…TYNN. Cys-439 carries S-palmitoyl cysteine lipidation. Cys-441 carries the cysteine methyl ester modification. Residue Cys-441 is the site of S-geranylgeranyl cysteine attachment. The propeptide at 442–444 is removed in mature form; the sequence is NLM.

This sequence belongs to the small GTPase superfamily. Rab family.

Its subcellular location is the cell membrane. The polypeptide is Ras-related protein RabX (rabX) (Dictyostelium discoideum (Social amoeba)).